The primary structure comprises 1007 residues: MASTAPNEQFPSCVRCKEFITTGHAYELGCDRWHTHCFACYKCEKPLSCESDFLVLGTGALICFDCSDSCKNCGKKIDDLAIILSSSNEAYCSDCFKCCKCGENIADLRYAKTKRGLFCLSCHEKLLAKRKYYEEKKRRLKKNLPSLPTPVIDNGHTDEVSASAVLPEKTFSRPASLVNEIPSGSEPSKDIETNSSDIVPHFITGYNDSDDNSGSSKFGSNVSIDVIGPEENSTEHVNDDVKEEAEAPSANMSLNVATDPTLSCKEPPSHSRNLLNKTPLRNSSGQYLAKSPSSYRQGIIVNDSLEESDQIDPPNNSSRNASELLTSVLHSPVSVNMKNPKGSNTDIFNTGEISQMDPSLSRKVLNNIVEETNALQRPVVEVVKEDRSVPDLAGVQQEQAEKYSYSNNSGKGRKISRSLSRRSKDLMINLKSRATGKQDSNVKLSPASKVTSRRSQDLMRDNDSHTGLDTPNSNSTSLDILVNNQKSLNYKRFTDNGTLRVTSGKETALEEQKNHSFKSPSPIDHLLQSPATPSNVSMYRTPPLDSSLTFDRRNGSSYSNQNYSIPSWQKTPKTQLENSDNFEEQKETLYENSESRNDPSLDKEIVTAEHYLKQLKINLKELESQREELMKEITEMKSMKEALRRHIESYNSEKNKLYLDSNELSNNPPMINEISLGESPPVKHVATASSVARSSVKPKFWKFFSSAKPQTEQSIQGVSTNNTNSIVKSAPVLLSAPSSGSNSGRLEISPPVLQNPNEFSDVRLVPIENDANMGQSKDGEEYLDGSNLYGSSLVARCNYENNEIPMILSVCIDFIESDEENMRSEGIYRKSGSQLVIEEIEKQFSAWKVQQNTETPNILTEQDLNVVTGVLKRYLRKLPNPIFTFQIYEPLMRLVKSKKMMENLPFVGGKLSLEAKNSDTYMSSKSALKNILEDLPREHYRVLRVLSEHIEKVTRYSHWNRMTLYNLALVFAPGLIRDFSGEKDIIDMKERNYIVAFIFGNYKDILT.

2 LIM zinc-binding domains span residues 13–66 (CVRC…CFDC) and 70–122 (CKNC…CLSC). Disordered regions lie at residues 203–293 (ITGY…KSPS), 401–478 (EKYS…STSL), and 505–600 (KETA…NDPS). A compositionally biased stretch (low complexity) spans 212–221 (NSGSSKFGSN). 2 stretches are compositionally biased toward polar residues: residues 250-261 (ANMSLNVATDPT) and 270-293 (HSRNLLNKTPLRNSSGQYLAKSPS). At Thr278 the chain carries Phosphothreonine. Ser291 is subject to Phosphoserine. Residues 411 to 421 (KGRKISRSLSR) are compositionally biased toward basic residues. Residues 454–466 (RSQDLMRDNDSHT) are compositionally biased toward basic and acidic residues. Polar residues-rich tracts occupy residues 467 to 478 (GLDTPNSNSTSL) and 529 to 579 (SPAT…LENS). Residue Thr532 is modified to Phosphothreonine. Positions 583-600 (EEQKETLYENSESRNDPS) are enriched in basic and acidic residues. A Rho-GAP domain is found at 791-1006 (SSLVARCNYE…FIFGNYKDIL (216 aa)).

Its function is as follows. GTPase-activating protein (GAP) for CDC42 and/or RHO1. Negative regulator of the pheromone-response pathway through the STE20 protein kinase; acts at a step between the G-protein and the MAP kinase module. Dominant suppressor of bud emergence defect caused by deletion of IPL2/BEM2. Involved in the control of polarized cell growth and proper bud site selection. The sequence is that of Rho-type GTPase-activating protein 1 (RGA1) from Saccharomyces cerevisiae (strain ATCC 204508 / S288c) (Baker's yeast).